A 479-amino-acid polypeptide reads, in one-letter code: NADH-quinone oxidoreductase subunit N 2 (479 aa).

The next 14 membrane-spanning stretches (helical) occupy residues F4–T24, G43–Y63, A67–S87, P99–I119, V121–M141, I159–L179, A201–F221, L239–A259, A267–V287, L294–D314, F318–V338, L364–F384, A401–V421, and A444–I464.

Belongs to the complex I subunit 2 family. NDH-1 is composed of 14 different subunits. Subunits NuoA, H, J, K, L, M, N constitute the membrane sector of the complex.

The protein resides in the cell inner membrane. It carries out the reaction a quinone + NADH + 5 H(+)(in) = a quinol + NAD(+) + 4 H(+)(out). In terms of biological role, NDH-1 shuttles electrons from NADH, via FMN and iron-sulfur (Fe-S) centers, to quinones in the respiratory chain. The immediate electron acceptor for the enzyme in this species is believed to be ubiquinone. Couples the redox reaction to proton translocation (for every two electrons transferred, four hydrogen ions are translocated across the cytoplasmic membrane), and thus conserves the redox energy in a proton gradient. This is NADH-quinone oxidoreductase subunit N 2 from Opitutus terrae (strain DSM 11246 / JCM 15787 / PB90-1).